The following is a 239-amino-acid chain: MSNELLTIDPVDLQFPFELKKQISCSLYLGNKTDNYVAFKVKTTNPKKYCVRPNTGVVHPRSSSEVLVTMQAQKEAPADLQCKDKFLLQCVVASPGATPKDVTHEMFSKEAGHRVEETKLRVVYVAPPRPPSPVREGSEEGSSPRASVSDNGNASDFTAAPRFSADRVDAQDNSSEARALVTKLTEEKNSAVQLNNRLQQELDQLRRESKRSKSGGIPFMYVLLVGLIGLILGYIMKRT.

N-acetylmethionine is present on M1. Topologically, residues 1-215 (MSNELLTIDP…RRESKRSKSG (215 aa)) are cytoplasmic. The residue at position 2 (S2) is an N-acetylserine; in Vesicle-associated protein 1-2, N-terminally processed. Positions 5–125 (LLTIDPVDLQ…EETKLRVVYV (121 aa)) constitute an MSP domain. The interval 123 to 174 (VYVAPPRPPSPVREGSEEGSSPRASVSDNGNASDFTAAPRFSADRVDAQDNS) is disordered. A Phosphoserine modification is found at S132. Residues 140-156 (EGSSPRASVSDNGNASD) are compositionally biased toward polar residues. Phosphoserine is present on S164. Residues 169-215 (DAQDNSSEARALVTKLTEEKNSAVQLNNRLQQELDQLRRESKRSKSG) are a coiled coil. The chain crosses the membrane as a helical; Anchor for type IV membrane protein span at residues 216–236 (GIPFMYVLLVGLIGLILGYIM).

The protein belongs to the VAMP-associated protein (VAP) (TC 9.B.17) family. In terms of assembly, interacts with ORP3A. Binds to VLG at the endomembrane system.

It is found in the endoplasmic reticulum membrane. Functionally, vesicle-associated protein that binds the oxysterol-binding protein ORP3A and allows its targeting to the ER. The polypeptide is Vesicle-associated protein 1-2 (Arabidopsis thaliana (Mouse-ear cress)).